The chain runs to 113 residues: Large ribosomal subunit protein uL22 (113 aa).

The protein belongs to the universal ribosomal protein uL22 family. In terms of assembly, part of the 50S ribosomal subunit.

This protein binds specifically to 23S rRNA; its binding is stimulated by other ribosomal proteins, e.g. L4, L17, and L20. It is important during the early stages of 50S assembly. It makes multiple contacts with different domains of the 23S rRNA in the assembled 50S subunit and ribosome. In terms of biological role, the globular domain of the protein is located near the polypeptide exit tunnel on the outside of the subunit, while an extended beta-hairpin is found that lines the wall of the exit tunnel in the center of the 70S ribosome. The sequence is that of Large ribosomal subunit protein uL22 from Xylella fastidiosa (strain M12).